A 381-amino-acid polypeptide reads, in one-letter code: Estradiol 17-beta-dehydrogenase 2 (381 aa).

Residues 4-24 (FSSESAWLCLTATAVLGGMLL) form a helical; Signal-anchor for type II membrane protein membrane-spanning segment. An NAD(+)-binding site is contributed by 83 to 112 (QKAVLVTGADSGFGHALAKHLDKLGFTVFA). Serine 220 lines the substrate pocket. The active-site Proton acceptor is tyrosine 233.

It belongs to the short-chain dehydrogenases/reductases (SDR) family. In terms of assembly, homodimer. As to expression, highly expressed in the placenta, and in the small intestine, and liver.

It is found in the endoplasmic reticulum membrane. It catalyses the reaction 17beta-estradiol + NAD(+) = estrone + NADH + H(+). It carries out the reaction testosterone + NAD(+) = androst-4-ene-3,17-dione + NADH + H(+). The catalysed reaction is 17beta-hydroxy-5alpha-androstan-3-one + NAD(+) = 5alpha-androstan-3,17-dione + NADH + H(+). The enzyme catalyses (20S)-hydroxypregn-4-en-3-one + NAD(+) = progesterone + NADH + H(+). Functionally, catalyzes the NAD-dependent oxidation of highly active 17beta-hydroxysteroids, such as estradiol (E2), testosterone (T), and dihydrotestosterone (DHT), to their less active forms and thus regulates the biological potency of these steroids. Oxidizes estradiol to estrone, testosterone to androstenedione, and dihydrotestosterone to 5alpha-androstan-3,17-dione. Also has 20-alpha-HSD activity. The sequence is that of Estradiol 17-beta-dehydrogenase 2 (Hsd17b2) from Rattus norvegicus (Rat).